A 521-amino-acid polypeptide reads, in one-letter code: Bifunctional purine biosynthesis protein PurH (521 aa).

In terms of domain architecture, MGS-like spans 1-145 (MIKQALISVS…KNHRDVTVVV (145 aa)).

It belongs to the PurH family.

The catalysed reaction is (6R)-10-formyltetrahydrofolate + 5-amino-1-(5-phospho-beta-D-ribosyl)imidazole-4-carboxamide = 5-formamido-1-(5-phospho-D-ribosyl)imidazole-4-carboxamide + (6S)-5,6,7,8-tetrahydrofolate. The enzyme catalyses IMP + H2O = 5-formamido-1-(5-phospho-D-ribosyl)imidazole-4-carboxamide. The protein operates within purine metabolism; IMP biosynthesis via de novo pathway; 5-formamido-1-(5-phospho-D-ribosyl)imidazole-4-carboxamide from 5-amino-1-(5-phospho-D-ribosyl)imidazole-4-carboxamide (10-formyl THF route): step 1/1. It participates in purine metabolism; IMP biosynthesis via de novo pathway; IMP from 5-formamido-1-(5-phospho-D-ribosyl)imidazole-4-carboxamide: step 1/1. This is Bifunctional purine biosynthesis protein PurH from Burkholderia pseudomallei (strain 1710b).